The chain runs to 122 residues: Large ribosomal subunit protein bL12 (122 aa).

This sequence belongs to the bacterial ribosomal protein bL12 family. As to quaternary structure, homodimer. Part of the ribosomal stalk of the 50S ribosomal subunit. Forms a multimeric L10(L12)X complex, where L10 forms an elongated spine to which 2 to 4 L12 dimers bind in a sequential fashion. Binds GTP-bound translation factors.

In terms of biological role, forms part of the ribosomal stalk which helps the ribosome interact with GTP-bound translation factors. Is thus essential for accurate translation. This chain is Large ribosomal subunit protein bL12, found in Stenotrophomonas maltophilia (strain R551-3).